Reading from the N-terminus, the 206-residue chain is Glycerol-3-phosphate acyltransferase (206 aa).

Helical transmembrane passes span 3–23 (LSLI…VIIG), 47–67 (VLGP…GTLA), 79–99 (HSLV…SIFL), 119–139 (PLFF…TSMV), and 152–172 (ILSF…VLIF).

It belongs to the PlsY family. In terms of assembly, probably interacts with PlsX.

It is found in the cell membrane. The enzyme catalyses an acyl phosphate + sn-glycerol 3-phosphate = a 1-acyl-sn-glycero-3-phosphate + phosphate. The protein operates within lipid metabolism; phospholipid metabolism. Its function is as follows. Catalyzes the transfer of an acyl group from acyl-phosphate (acyl-PO(4)) to glycerol-3-phosphate (G3P) to form lysophosphatidic acid (LPA). This enzyme utilizes acyl-phosphate as fatty acyl donor, but not acyl-CoA or acyl-ACP. The protein is Glycerol-3-phosphate acyltransferase of Latilactobacillus sakei subsp. sakei (strain 23K) (Lactobacillus sakei subsp. sakei).